We begin with the raw amino-acid sequence, 492 residues long: UDP-N-acetylmuramate--L-alanine ligase (492 aa).

126–132 (GTHGKTT) contacts ATP.

It belongs to the MurCDEF family.

The protein localises to the cytoplasm. It carries out the reaction UDP-N-acetyl-alpha-D-muramate + L-alanine + ATP = UDP-N-acetyl-alpha-D-muramoyl-L-alanine + ADP + phosphate + H(+). Its pathway is cell wall biogenesis; peptidoglycan biosynthesis. Functionally, cell wall formation. In Serratia proteamaculans (strain 568), this protein is UDP-N-acetylmuramate--L-alanine ligase.